We begin with the raw amino-acid sequence, 331 residues long: Tyrosine--tRNA ligase (331 aa).

Residues tyrosine 31, tyrosine 155, glutamine 159, aspartate 162, and glutamine 177 each coordinate L-tyrosine. The 'KMSKS' region motif lies at 218-222 (KMSKS). Lysine 221 is a binding site for ATP.

It belongs to the class-I aminoacyl-tRNA synthetase family. TyrS type 4 subfamily. Homodimer.

It localises to the cytoplasm. It catalyses the reaction tRNA(Tyr) + L-tyrosine + ATP = L-tyrosyl-tRNA(Tyr) + AMP + diphosphate + H(+). In terms of biological role, catalyzes the attachment of tyrosine to tRNA(Tyr) in a two-step reaction: tyrosine is first activated by ATP to form Tyr-AMP and then transferred to the acceptor end of tRNA(Tyr). The sequence is that of Tyrosine--tRNA ligase from Thermoplasma volcanium (strain ATCC 51530 / DSM 4299 / JCM 9571 / NBRC 15438 / GSS1).